The following is a 265-amino-acid chain: Type II pantothenate kinase (265 aa).

Asp-6–Lys-13 contacts ATP. Glu-70 functions as the Proton acceptor in the catalytic mechanism. Residues Thr-99, Gly-121–Gln-125, Tyr-137, and Ser-225 contribute to the ATP site.

This sequence belongs to the type II pantothenate kinase family. As to quaternary structure, homodimer.

Its subcellular location is the cytoplasm. It carries out the reaction (R)-pantothenate + ATP = (R)-4'-phosphopantothenate + ADP + H(+). Its pathway is cofactor biosynthesis; coenzyme A biosynthesis; CoA from (R)-pantothenate: step 1/5. Its function is as follows. Catalyzes the phosphorylation of pantothenate (Pan), the first step in CoA biosynthesis. This chain is Type II pantothenate kinase, found in Staphylococcus epidermidis (strain ATCC 35984 / DSM 28319 / BCRC 17069 / CCUG 31568 / BM 3577 / RP62A).